The chain runs to 308 residues: S-crystallin SL18 (308 aa).

Residues 2-80 (PKYTLYYFNS…YLARQFGFYG (79 aa)) enclose the GST N-terminal domain. The disordered stretch occupies residues 165–205 (EMRSQDSMVEPPSQKLSPELESQSSLCSERPQCGPPDPMMG). Polar residues predominate over residues 178-191 (QKLSPELESQSSLC). The GST C-terminal domain occupies 185–308 (ESQSSLCSER…YFTLRNYTDF (124 aa)).

The protein belongs to the GST superfamily. As to expression, lens.

Its function is as follows. S-crystallins are structural components of squids and octopi eye lens. Contains relatively little if any GST activity. The chain is S-crystallin SL18 from Nototodarus sloanii (Wellington flying squid).